The following is a 208-amino-acid chain: Large ribosomal subunit protein uL3 (208 aa).

A disordered region spans residues glycine 116–proline 146.

The protein belongs to the universal ribosomal protein uL3 family. In terms of assembly, part of the 50S ribosomal subunit. Forms a cluster with proteins L14 and L19.

In terms of biological role, one of the primary rRNA binding proteins, it binds directly near the 3'-end of the 23S rRNA, where it nucleates assembly of the 50S subunit. This chain is Large ribosomal subunit protein uL3, found in Streptococcus mutans serotype c (strain ATCC 700610 / UA159).